Here is a 181-residue protein sequence, read N- to C-terminus: ADP-ribosylation factor 1 (181 aa).

Glycine 2 is lipidated: N-myristoyl glycine. The interval 3-16 (NMFANLFKGLFGKK) is important for the stable binding to the membranes. GTP contacts are provided by residues 24–32 (GLDAAGKTT), 126–129 (NKQD), and alanine 160.

This sequence belongs to the small GTPase superfamily. Arf family.

It is found in the golgi apparatus membrane. The enzyme catalyses GTP + H2O = GDP + phosphate + H(+). Its activity is regulated as follows. Alternates between an inactive GDP-bound form and an active GTP-bound form. Activated by a guanine nucleotide-exchange factor (GEF) and inactivated by GTPase-activating protein (GAP). Its function is as follows. Small GTPase involved in protein trafficking between different compartments. Modulates vesicle budding and uncoating within the Golgi complex. In its GTP-bound form, triggers the recruitment of coatomer proteins to the Golgi membrane. The hydrolysis of ARF1-bound GTP, which is mediated by ARFGAPs proteins, is required for dissociation of coat proteins from Golgi membranes and vesicles. The sequence is that of ADP-ribosylation factor 1 (arf1) from Xenopus laevis (African clawed frog).